The following is an 870-amino-acid chain: Protein translocase subunit SecA (870 aa).

ATP is bound by residues Gln86, 104–108, and Asp499; that span reads GEGKT. Residues Cys854, Cys856, Cys865, and His866 each coordinate Zn(2+).

Belongs to the SecA family. In terms of assembly, monomer and homodimer. Part of the essential Sec protein translocation apparatus which comprises SecA, SecYEG and auxiliary proteins SecDF-YajC and YidC. It depends on Zn(2+) as a cofactor.

The protein localises to the cell inner membrane. It localises to the cytoplasm. It carries out the reaction ATP + H2O + cellular proteinSide 1 = ADP + phosphate + cellular proteinSide 2.. In terms of biological role, part of the Sec protein translocase complex. Interacts with the SecYEG preprotein conducting channel. Has a central role in coupling the hydrolysis of ATP to the transfer of proteins into and across the cell membrane, serving both as a receptor for the preprotein-SecB complex and as an ATP-driven molecular motor driving the stepwise translocation of polypeptide chains across the membrane. This chain is Protein translocase subunit SecA, found in Ehrlichia ruminantium (strain Welgevonden).